Reading from the N-terminus, the 360-residue chain is Peptide chain release factor 1 (360 aa).

Q235 carries the post-translational modification N5-methylglutamine.

This sequence belongs to the prokaryotic/mitochondrial release factor family. In terms of processing, methylated by PrmC. Methylation increases the termination efficiency of RF1.

It is found in the cytoplasm. Its function is as follows. Peptide chain release factor 1 directs the termination of translation in response to the peptide chain termination codons UAG and UAA. This Paracidovorax citrulli (strain AAC00-1) (Acidovorax citrulli) protein is Peptide chain release factor 1.